A 474-amino-acid chain; its full sequence is MSMKNLSLISACLLLGACGSTPAPLDSGLAAPSQWRYLAAGRSDASDIRQWWKAFGAPELDSLLQRALLNSQDLGAAVARVRQAQASAVIAGAPLLPELNATLGASRQKLLRDSGYSGTDATSDNDAVDSFSAGLSASYEVDFWGGRQAAYRSALESLKASEYDRATVELTLLSGVANSYLQVLALREQQRIARLNLDNAEHVLRLVETRHAAGSATALEVAQQSSLVASQRKQLPLLEQQAHEALITLATLIGEPVQALQVAERPFDSLRWPETGAGLPSELLSRRPDIANAEAQLAAAQADVQVARAALFPKLTLSASLSSGANRAADTFRNPYYNLGANLLAPIFNHGRLRAERDRSLARQEELLETYRKAILTAFADTERSLNSIDGLDRQLHWQQQELEQAQRAFDLSDSRYQAGAETLLTVLETQRTLYAAQDAAVQLRLARLQASVGLYKALGGGWQSDRQGLARKD.

The N-terminal stretch at 1 to 17 is a signal peptide; it reads MSMKNLSLISACLLLGA. Residue C18 is the site of N-palmitoyl cysteine attachment. C18 is lipidated: S-diacylglycerol cysteine.

Belongs to the outer membrane factor (OMF) (TC 1.B.17) family. As to quaternary structure, part of the tripartite efflux system PvdRT-OpmQ, which is composed of an inner membrane component with both ATPase and permease domains, PvdT, a periplasmic membrane fusion protein, PvdR, and an outer membrane component, OpmQ.

The protein localises to the cell outer membrane. Its function is as follows. Part of the tripartite efflux system PvdRT-OpmQ required for the secretion into the extracellular milieu of the siderophore pyoverdine (PVD), which is involved in iron acquisition. The system is responsible for export of newly synthesized PVD after the final steps of biosynthesis have taken place in the periplasm. It is also responsible for recycling of PVD after internalization of ferri-PVD into the periplasm by the outer-membrane receptor FpvA and release of iron from PVD, thus making PVD available for new cycles of iron uptake. In addition, can expel unwanted metals complexed with PVD from the periplasm into the extracellular medium. This chain is Pyoverdine export outer membrane protein OpmQ, found in Pseudomonas aeruginosa (strain ATCC 15692 / DSM 22644 / CIP 104116 / JCM 14847 / LMG 12228 / 1C / PRS 101 / PAO1).